The primary structure comprises 253 residues: Triosephosphate isomerase (253 aa).

8–10 (NWK) serves as a coordination point for substrate. The active-site Electrophile is the H93. The Proton acceptor role is filled by E165. Substrate-binding positions include G171, S210, and 231–232 (GG).

The protein belongs to the triosephosphate isomerase family. As to quaternary structure, homodimer.

The protein resides in the cytoplasm. It catalyses the reaction D-glyceraldehyde 3-phosphate = dihydroxyacetone phosphate. It functions in the pathway carbohydrate biosynthesis; gluconeogenesis. It participates in carbohydrate degradation; glycolysis; D-glyceraldehyde 3-phosphate from glycerone phosphate: step 1/1. Involved in the gluconeogenesis. Catalyzes stereospecifically the conversion of dihydroxyacetone phosphate (DHAP) to D-glyceraldehyde-3-phosphate (G3P). This Francisella tularensis subsp. novicida (strain U112) protein is Triosephosphate isomerase.